We begin with the raw amino-acid sequence, 515 residues long: E3 ubiquitin-protein ligase RNF217 (515 aa).

Disordered stretches follow at residues M1–Q125 and P147–L189. The segment covering G10–A22 has biased composition (gly residues). Composition is skewed to low complexity over residues G39 to P49 and P147 to P157. Pro residues predominate over residues S158–P178. Over residues S179–L189 the composition is skewed to low complexity. The interval M232–Y451 is TRIAD supradomain. Zn(2+) is bound by residues C236, C239, C256, C259, C356, C359, H364, C369, C396, and C399. The RING-type 1 zinc finger occupies C236–C282. The segment at I301 to C369 adopts an IBR-type zinc-finger fold. Residues C396–C425 form an RING-type 2; atypical zinc finger. C409 is a catalytic residue. The Zn(2+) site is built by C414, C417, C422, C425, H438, and C447. Residues L476–F496 traverse the membrane as a helical segment.

It belongs to the RBR family. RNF217 subfamily. In terms of assembly, interacts with HAX1.

The protein localises to the membrane. It is found in the cytoplasm. The catalysed reaction is [E2 ubiquitin-conjugating enzyme]-S-ubiquitinyl-L-cysteine + [acceptor protein]-L-lysine = [E2 ubiquitin-conjugating enzyme]-L-cysteine + [acceptor protein]-N(6)-ubiquitinyl-L-lysine.. Its pathway is protein modification; protein ubiquitination. E3 ubiquitin-protein ligase which accepts ubiquitin from E2 ubiquitin-conjugating enzymes in the form of a thioester and then directly transfers the ubiquitin to targeted substrates. Mediates the degradation of the iron exporter ferroportin/SLC40A1 and thus regulates iron homeostasis. The polypeptide is E3 ubiquitin-protein ligase RNF217 (Rnf217) (Mus musculus (Mouse)).